The sequence spans 512 residues: Cytochrome P450 1A2 (512 aa).

Residue S65 is glycosylated (O-linked (GlcNAc) serine). F222 contacts substrate. C454 contacts heme.

This sequence belongs to the cytochrome P450 family. As to quaternary structure, interacts with PGRMC1; the interaction requires PGRMC1 homodimerization. Requires heme as cofactor. Constitutively expressed in liver.

The protein resides in the endoplasmic reticulum membrane. It is found in the microsome membrane. The enzyme catalyses an organic molecule + reduced [NADPH--hemoprotein reductase] + O2 = an alcohol + oxidized [NADPH--hemoprotein reductase] + H2O + H(+). It carries out the reaction 17beta-estradiol + reduced [NADPH--hemoprotein reductase] + O2 = 2-hydroxy-17beta-estradiol + oxidized [NADPH--hemoprotein reductase] + H2O + H(+). The catalysed reaction is 17beta-estradiol + reduced [NADPH--hemoprotein reductase] + O2 = 4-hydroxy-17beta-estradiol + oxidized [NADPH--hemoprotein reductase] + H2O + H(+). It catalyses the reaction estrone + reduced [NADPH--hemoprotein reductase] + O2 = 2-hydroxyestrone + oxidized [NADPH--hemoprotein reductase] + H2O + H(+). The enzyme catalyses estrone + reduced [NADPH--hemoprotein reductase] + O2 = 4-hydroxyestrone + oxidized [NADPH--hemoprotein reductase] + H2O + H(+). It carries out the reaction cholesterol + reduced [NADPH--hemoprotein reductase] + O2 = 25-hydroxycholesterol + oxidized [NADPH--hemoprotein reductase] + H2O + H(+). The catalysed reaction is all-trans-retinol + reduced [NADPH--hemoprotein reductase] + O2 = all-trans-retinal + oxidized [NADPH--hemoprotein reductase] + 2 H2O + H(+). It catalyses the reaction all-trans-retinal + reduced [NADPH--hemoprotein reductase] + O2 = all-trans-retinoate + oxidized [NADPH--hemoprotein reductase] + H2O + 2 H(+). The enzyme catalyses (5Z,8Z,11Z,14Z)-eicosatetraenoate + reduced [NADPH--hemoprotein reductase] + O2 = (14R,15S)-epoxy-(5Z,8Z,11Z)-eicosatrienoate + oxidized [NADPH--hemoprotein reductase] + H2O + H(+). It carries out the reaction (5Z,8Z,11Z,14Z)-eicosatetraenoate + reduced [NADPH--hemoprotein reductase] + O2 = (14S,15R)-epoxy-(5Z,8Z,11Z)-eicosatrienoate + oxidized [NADPH--hemoprotein reductase] + H2O + H(+). The catalysed reaction is (5Z,8Z,11Z,14Z,17Z)-eicosapentaenoate + reduced [NADPH--hemoprotein reductase] + O2 = (17R,18S)-epoxy-(5Z,8Z,11Z,14Z)-eicosatetraenoate + oxidized [NADPH--hemoprotein reductase] + H2O + H(+). It catalyses the reaction (4Z,7Z,10Z,13Z,16Z,19Z)-docosahexaenoate + reduced [NADPH--hemoprotein reductase] + O2 = (19R,20S)-epoxy-(4Z,7Z,10Z,13Z,16Z)-docosapentaenoate + oxidized [NADPH--hemoprotein reductase] + H2O + H(+). The enzyme catalyses (5S)-hydroperoxy-(6E,8Z,11Z,14Z)-eicosatetraenoate = 5-oxo-(6E,8Z,11Z,14Z)-eicosatetraenoate + H2O. It carries out the reaction (12S)-hydroperoxy-(5Z,8Z,10E,14Z)-eicosatetraenoate = 12-oxo-(5Z,8Z,10E,14Z)-eicosatetraenoate + H2O. The catalysed reaction is (15S)-hydroperoxy-(5Z,8Z,11Z,13E)-eicosatetraenoate = 15-oxo-(5Z,8Z,11Z,13E)-eicosatetraenoate + H2O. It catalyses the reaction (13S)-hydroperoxy-(9Z,11E)-octadecadienoate = 13-oxo-(9Z,11E)-octadecadienoate + H2O. The enzyme catalyses (5Z,8Z,11Z,14Z)-eicosatetraenoate + reduced [NADPH--hemoprotein reductase] + O2 = 13-hydroxy-(5Z,8Z,11Z,14Z)-eicosatetraenoate + oxidized [NADPH--hemoprotein reductase] + H2O + H(+). It carries out the reaction (5Z,8Z,11Z,14Z)-eicosatetraenoate + reduced [NADPH--hemoprotein reductase] + O2 = 19-hydroxy-(5Z,8Z,11Z,14Z)-eicosatetraenoate + oxidized [NADPH--hemoprotein reductase] + H2O + H(+). The catalysed reaction is (9Z,12Z)-octadecadienoate + reduced [NADPH--hemoprotein reductase] + O2 = 11-hydroxy-(9Z,12Z)-octadecadienoate + oxidized [NADPH--hemoprotein reductase] + H2O + H(+). The protein operates within cofactor metabolism; retinol metabolism. Its pathway is steroid metabolism; cholesterol metabolism. It functions in the pathway lipid metabolism; arachidonate metabolism. A cytochrome P450 monooxygenase involved in the metabolism of various endogenous substrates, including fatty acids, steroid hormones and vitamins. Mechanistically, uses molecular oxygen inserting one oxygen atom into a substrate, and reducing the second into a water molecule, with two electrons provided by NADPH via cytochrome P450 reductase (NADPH--hemoprotein reductase). Catalyzes the hydroxylation of carbon-hydrogen bonds. Exhibits high catalytic activity for the formation of hydroxyestrogens from estrone (E1) and 17beta-estradiol (E2), namely 2-hydroxy E1 and E2. Metabolizes cholesterol toward 25-hydroxycholesterol, a physiological regulator of cellular cholesterol homeostasis. May act as a major enzyme for all-trans retinoic acid biosynthesis in the liver. Catalyzes two successive oxidative transformation of all-trans retinol to all-trans retinal and then to the active form all-trans retinoic acid. Primarily catalyzes stereoselective epoxidation of the last double bond of polyunsaturated fatty acids (PUFA), displaying a strong preference for the (R,S) stereoisomer. Catalyzes bisallylic hydroxylation and omega-1 hydroxylation of PUFA. May also participate in eicosanoids metabolism by converting hydroperoxide species into oxo metabolites (lipoxygenase-like reaction, NADPH-independent). Plays a role in the oxidative metabolism of xenobiotics. Catalyzes the N-hydroxylation of heterocyclic amines and the O-deethylation of phenacetin. Metabolizes caffeine via N3-demethylation. This chain is Cytochrome P450 1A2 (CYP1A2), found in Canis lupus familiaris (Dog).